The chain runs to 464 residues: Juvenile hormone epoxide hydrolase 1 (464 aa).

Residues 7–27 (MLIFAAIAGIAVLYYQITKEL) form a helical membrane-spanning segment. Asp224 (nucleophile) is an active-site residue. Residue Tyr370 is the Proton donor of the active site. The Proton acceptor role is filled by His427.

It belongs to the peptidase S33 family. Developing oocytes, fat body and midgut epithelium of adults.

It is found in the microsome membrane. It localises to the endoplasmic reticulum membrane. The catalysed reaction is cis-stilbene oxide + H2O = (1R,2R)-hydrobenzoin. It carries out the reaction 1-(4-methoxyphenyl)-N-methyl-N-[(3-methyloxetan-3-yl)methyl]methanamine + H2O = 2-{[(4-methoxybenzyl)(methyl)amino]methyl}-2-methylpropane-1,3-diol. Functionally, catalyzes juvenile hormone hydrolysis. The chain is Juvenile hormone epoxide hydrolase 1 from Ctenocephalides felis (Cat flea).